Consider the following 206-residue polypeptide: Putative type I restriction enzyme MpnIIP endonuclease subunit C-terminal part (206 aa).

Functionally, the C-terminal section of a putative type I restriction enzyme that if reconstituted might recognize 5'-GAN(7)TAY-3' and cleave a random distance away. Subunit R is required for both nuclease and ATPase activities, but not for modification. The chain is Putative type I restriction enzyme MpnIIP endonuclease subunit C-terminal part from Mycoplasma pneumoniae (strain ATCC 29342 / M129 / Subtype 1) (Mycoplasmoides pneumoniae).